The following is a 396-amino-acid chain: Argininosuccinate synthase (396 aa).

9–17 is an ATP binding site; it reads AYSGGLDTS. Tyr-85 serves as a coordination point for L-citrulline. Residue Gly-115 coordinates ATP. Residues Thr-117, Asn-121, and Asp-122 each contribute to the L-aspartate site. Residue Asn-121 participates in L-citrulline binding. L-citrulline is bound by residues Arg-125, Ser-173, Glu-258, and Tyr-270.

Belongs to the argininosuccinate synthase family. Type 1 subfamily. As to quaternary structure, homotetramer.

The protein localises to the cytoplasm. It carries out the reaction L-citrulline + L-aspartate + ATP = 2-(N(omega)-L-arginino)succinate + AMP + diphosphate + H(+). It functions in the pathway amino-acid biosynthesis; L-arginine biosynthesis; L-arginine from L-ornithine and carbamoyl phosphate: step 2/3. In Streptococcus agalactiae serotype V (strain ATCC BAA-611 / 2603 V/R), this protein is Argininosuccinate synthase.